We begin with the raw amino-acid sequence, 445 residues long: Reticulon-4 receptor-like 1 (445 aa).

The signal sequence occupies residues 1 to 24 (MLRKGCCVELLLLLLAGELPLSGG). One can recognise an LRRNT domain in the interval 25–54 (CPRDCVCYPSPMTVSCQAHNFAAIPEGIPE). 8 LRR repeats span residues 55 to 76 (DSER…HFSP), 77 to 98 (AMVT…TFEG), 101 to 123 (HLEE…TFQG), 126 to 147 (KLHA…IFGG), 150 to 171 (SLQY…IFVD), 174 to 195 (NLSH…IFRG), 198 to 219 (NLDR…AFHD), and 222 to 243 (RLTT…CLAP). An LRRCT domain is found at 255–306 (NAWDCGCRARSLWEWLRRFRGSSSVVPCATPELRQGQDLKSLRVEDFRNCTG). 2 disordered regions span residues 304 to 380 (CTGP…ELPE) and 401 to 421 (RPKR…SGVQ). 2 stretches are compositionally biased toward basic residues: residues 352 to 366 (GSKK…HRNR) and 401 to 413 (RPKR…RRTP). Residue Ser-424 is the site of GPI-anchor amidated serine attachment. Residues 424-444 (SSGTALGVSLLAWILGLVVSL) form a helical membrane-spanning segment. The propeptide at 425-445 (SGTALGVSLLAWILGLVVSLR) is removed in mature form.

It belongs to the Nogo receptor family. As to quaternary structure, identified in a complex that contains RTN4R, RTN4RL1 and NGFR; the interaction depends on the presence of chondroitin sulfate proteoglycans. Does not interact with MAG, OMG and RTN4. In terms of tissue distribution, detected in brain (at protein level). Expressed in various regions of the brain, including the cerebral cortex, hippocampus, striatum, thalamus and cerebellum.

It is found in the cell membrane. It localises to the membrane raft. The protein localises to the perikaryon. The protein resides in the cell projection. Cell surface receptor. Plays a functionally redundant role in postnatal brain development and in regulating axon regeneration in the adult central nervous system. Contributes to normal axon migration across the brain midline and normal formation of the corpus callosum. Protects motoneurons against apoptosis; protection against apoptosis is probably mediated by MAG. Plays a role in inhibiting neurite outgrowth and axon regeneration via its binding to neuronal chondroitin sulfate proteoglycans. Binds heparin. Like other family members, plays a role in restricting the number dendritic spines and the number of synapses that are formed during brain development. Signaling mediates activation of Rho and downstream reorganization of the actin cytoskeleton. The chain is Reticulon-4 receptor-like 1 from Rattus norvegicus (Rat).